Here is a 173-residue protein sequence, read N- to C-terminus: Telomerase RNA component interacting RNase (173 aa).

Residues 1-12 are compositionally biased toward basic and acidic residues; it reads MAARGRRAEPPG. The tract at residues 1–119 is disordered; sequence MAARGRRAEP…LSFVGKRRGG (119 aa). 2 stretches are compositionally biased toward low complexity: residues 14–23 and 43–52; these read EAPGPAGSGR and SGSSPVSSGV. Basic and acidic residues predominate over residues 64-79; that stretch reads LFKRKMEEEQRQRQEE. The span at 80–90 shows a compositional bias: pro residues; that stretch reads PPPGPQRPDPP. K143 carries the post-translational modification N6-acetyllysine.

In terms of assembly, part of the telomerase RNA 3' end complex which contains about 488 proteins.

Functionally, exoribonuclease that is part of the telomerase RNA 3' end processing complex and which has the ability to cleave all four unpaired RNA nucleotides from the 5' end or 3' end with higher efficiency for purine bases. The chain is Telomerase RNA component interacting RNase from Mus musculus (Mouse).